A 448-amino-acid chain; its full sequence is MRYLPLTPEDRVEMLGAIGVKSIDDLFVDVPVSARRDAPVDLPHHAGELDVEREMAGLARRNRAAGEGPFFCGAGAYRHHVPATVDHIIQRSEFLTSYTPYQPEIAQGTLQVLFEFQTQVAALTGMEVANASLYDGSTGAAEAVMMAQRVTRRNKAVMSGGVHPHYVGAIETLAHAAGVATQALPAAVDAEDAVIAAIDQDTACVVVQTPNVFGTVTDVSKIAEAAHAAGALLIVVTTEAVSFGLLKSPGEMGADIAVAEGQSIGNGLNFGGPYVGLFACKEKFVRQMPGRLCGETVDADGKRGFVLTLSTREQHIRRDKATSNICTNSGLCALAFSIHMSLLGETGLRQLAAVNHQKALALRDALKAVPGVEILTPRFFNEFAIRVPGKAAEVVEILAAHGVIAGVPFSRLDAKAGLDDVLLVAATETTLDIDIPVFAKALTKVFAQ.

It belongs to the GcvP family. N-terminal subunit subfamily. In terms of assembly, the glycine cleavage system is composed of four proteins: P, T, L and H. In this organism, the P 'protein' is a heterodimer of two subunits.

The catalysed reaction is N(6)-[(R)-lipoyl]-L-lysyl-[glycine-cleavage complex H protein] + glycine + H(+) = N(6)-[(R)-S(8)-aminomethyldihydrolipoyl]-L-lysyl-[glycine-cleavage complex H protein] + CO2. The glycine cleavage system catalyzes the degradation of glycine. The P protein binds the alpha-amino group of glycine through its pyridoxal phosphate cofactor; CO(2) is released and the remaining methylamine moiety is then transferred to the lipoamide cofactor of the H protein. The polypeptide is Probable glycine dehydrogenase (decarboxylating) subunit 1 (Caulobacter vibrioides (strain ATCC 19089 / CIP 103742 / CB 15) (Caulobacter crescentus)).